We begin with the raw amino-acid sequence, 92 residues long: Defensin-like protein 96 (92 aa).

The signal sequence occupies residues 1–29; the sequence is MGSLRLSTVAIAVVVCLSILLISPTEVDG. 4 disulfide bridges follow: C33/C80, C40/C65, C49/C77, and C53/C79.

It belongs to the DEFL family.

Its subcellular location is the secreted. The polypeptide is Defensin-like protein 96 (Arabidopsis thaliana (Mouse-ear cress)).